Consider the following 332-residue polypeptide: ATP-dependent (S)-NAD(P)H-hydrate dehydratase (332 aa).

A YjeF C-terminal domain is found at 46–326 (LLERARNIVP…EQIHNVFDDI (281 aa)). (6S)-NADPHX-binding positions include glycine 146 and 199–205 (NAIEFCR). ATP-binding positions include 230–234 (KGLND) and 251–260 (GSGRRCGGQG). Residue aspartate 261 coordinates (6S)-NADPHX.

The protein belongs to the NnrD/CARKD family. The cofactor is Mg(2+).

It catalyses the reaction (6S)-NADHX + ATP = ADP + phosphate + NADH + H(+). The catalysed reaction is (6S)-NADPHX + ATP = ADP + phosphate + NADPH + H(+). Functionally, catalyzes the dehydration of the S-form of NAD(P)HX at the expense of ATP, which is converted to ADP. Together with NAD(P)HX epimerase, which catalyzes the epimerization of the S- and R-forms, the enzyme allows the repair of both epimers of NAD(P)HX, a damaged form of NAD(P)H that is a result of enzymatic or heat-dependent hydration. In Aedes aegypti (Yellowfever mosquito), this protein is ATP-dependent (S)-NAD(P)H-hydrate dehydratase.